The primary structure comprises 86 residues: Small ribosomal subunit protein bS20 (86 aa).

The segment covering 1-22 (MANIKSAKKRAVQSEKRRKHNA) has biased composition (basic residues). A disordered region spans residues 1 to 28 (MANIKSAKKRAVQSEKRRKHNASGRSMM).

Belongs to the bacterial ribosomal protein bS20 family.

Functionally, binds directly to 16S ribosomal RNA. The polypeptide is Small ribosomal subunit protein bS20 (Serratia proteamaculans (strain 568)).